The following is a 450-amino-acid chain: FAD-linked oxidoreductase penO (450 aa).

The 172-residue stretch at P32–A203 folds into the FAD-binding PCMH-type domain.

This sequence belongs to the oxygen-dependent FAD-linked oxidoreductase family. FAD serves as cofactor.

Its pathway is secondary metabolite biosynthesis. FAD-linked oxidoreductase; part of the gene cluster that mediates the biosynthesis of the indole diterpenes penitrems. The geranylgeranyl diphosphate (GGPP) synthase penG catalyzes the first step in penitrem biosynthesis via conversion of farnesyl pyrophosphate and isopentyl pyrophosphate into geranylgeranyl pyrophosphate (GGPP). Condensation of indole-3-glycerol phosphate with GGPP by the prenyl transferase penC then forms 3-geranylgeranylindole (3-GGI). Epoxidation by the FAD-dependent monooxygenase penM leads to a epoxidized-GGI that is substrate of the terpene cyclase penB for cyclization to yield paspaline. Paspaline is subsequently converted to 13-desoxypaxilline by the cytochrome P450 monooxygenase penP, the latter being then converted to paxilline by the cytochrome P450 monooxygenase penQ. Paxilline is converted to beta-paxitriol via C-10 ketoreduction by the short-chain dehydrogenase PC-15 which can be monoprenylated at the C-20 by the indole diterpene prenyltransferase penD. A two-step elimination (acetylation and elimination) process performed by the O-acetyltransferase PC-16 and the P.simplicissimum ptmI-ortholog not yet identified in P.crustosum, leads to the production of the prenylated form of penijanthine. The FAD-linked oxidoreductase ptmO then converts the prenylated form of penijanthine into PC-M5 which is in turn transformed into PC-M4 by the aromatic dimethylallyltransferase PC-22. A series of oxidation steps involving 4 cytochrome P450 monooxygenases (PC-21, PC-05, PC-23, PC-20) and a FAD-dependent monooxygenase (PC-14) are required for the transformation of PC-M4 to penitrems A and E. Synthesis of these final products is proposed to proceed via penitrems D and C (PC-21, PC-05, PC-14) and penitrems B and F (PC-21, PC-05, PC-14, PC-23). This Penicillium crustosum (Blue mold fungus) protein is FAD-linked oxidoreductase penO.